Consider the following 901-residue polypeptide: Protein translocase subunit SecA (901 aa).

ATP-binding positions include Gln-87, Gly-105–Thr-109, and Asp-512. Positions His-859–Gln-901 are disordered. Zn(2+)-binding residues include Cys-885, Cys-887, Cys-896, and His-897. The segment covering Lys-891 to Gln-901 has biased composition (basic residues).

Belongs to the SecA family. Monomer and homodimer. Part of the essential Sec protein translocation apparatus which comprises SecA, SecYEG and auxiliary proteins SecDF-YajC and YidC. The cofactor is Zn(2+).

It is found in the cell inner membrane. It localises to the cytoplasm. It carries out the reaction ATP + H2O + cellular proteinSide 1 = ADP + phosphate + cellular proteinSide 2.. Part of the Sec protein translocase complex. Interacts with the SecYEG preprotein conducting channel. Has a central role in coupling the hydrolysis of ATP to the transfer of proteins into and across the cell membrane, serving both as a receptor for the preprotein-SecB complex and as an ATP-driven molecular motor driving the stepwise translocation of polypeptide chains across the membrane. In Escherichia coli O157:H7, this protein is Protein translocase subunit SecA.